The primary structure comprises 151 residues: Deoxyuridine 5'-triphosphate nucleotidohydrolase (151 aa).

Substrate contacts are provided by residues arginine 70–glycine 72, asparagine 83, leucine 87–aspartate 89, and methionine 97.

Belongs to the dUTPase family. Requires Mg(2+) as cofactor.

The enzyme catalyses dUTP + H2O = dUMP + diphosphate + H(+). It functions in the pathway pyrimidine metabolism; dUMP biosynthesis; dUMP from dCTP (dUTP route): step 2/2. In terms of biological role, this enzyme is involved in nucleotide metabolism: it produces dUMP, the immediate precursor of thymidine nucleotides and it decreases the intracellular concentration of dUTP so that uracil cannot be incorporated into DNA. In Stutzerimonas stutzeri (strain A1501) (Pseudomonas stutzeri), this protein is Deoxyuridine 5'-triphosphate nucleotidohydrolase.